Reading from the N-terminus, the 70-residue chain is Conotoxin Pl171 (70 aa).

Positions 1 to 21 (MGMRMMFTMILLVVLVTTVVS) are cleaved as a signal peptide. 2 disulfide bridges follow: C54–C61 and C55–C67. F69 bears the Phenylalanine amide mark.

The protein belongs to the conotoxin A superfamily. In terms of tissue distribution, expressed by the venom duct.

It localises to the secreted. Probable neurotoxin with unknown target. Possibly targets ion channels. This Conus planorbis (Planorbis cone) protein is Conotoxin Pl171.